A 213-amino-acid polypeptide reads, in one-letter code: Holliday junction branch migration complex subunit RuvA (213 aa).

Residues 1 to 69 (MISYLKGIVA…EEIPLLYGFS (69 aa)) form a domain I region. The domain II stretch occupies residues 70-148 (SPAERDLFRH…EWRKSAGFFV (79 aa)). Residues 149-158 (ATEGPAPGIL) form a flexible linker region. The interval 158–213 (LEEVQMTLFALGYTAHEVSHALHVVSEDIGLPKDAYVEDWIKQAIAHLSSSEQVSH) is domain III.

It belongs to the RuvA family. As to quaternary structure, homotetramer. Forms an RuvA(8)-RuvB(12)-Holliday junction (HJ) complex. HJ DNA is sandwiched between 2 RuvA tetramers; dsDNA enters through RuvA and exits via RuvB. An RuvB hexamer assembles on each DNA strand where it exits the tetramer. Each RuvB hexamer is contacted by two RuvA subunits (via domain III) on 2 adjacent RuvB subunits; this complex drives branch migration. In the full resolvosome a probable DNA-RuvA(4)-RuvB(12)-RuvC(2) complex forms which resolves the HJ.

It is found in the cytoplasm. Functionally, the RuvA-RuvB-RuvC complex processes Holliday junction (HJ) DNA during genetic recombination and DNA repair, while the RuvA-RuvB complex plays an important role in the rescue of blocked DNA replication forks via replication fork reversal (RFR). RuvA specifically binds to HJ cruciform DNA, conferring on it an open structure. The RuvB hexamer acts as an ATP-dependent pump, pulling dsDNA into and through the RuvAB complex. HJ branch migration allows RuvC to scan DNA until it finds its consensus sequence, where it cleaves and resolves the cruciform DNA. The protein is Holliday junction branch migration complex subunit RuvA of Nostoc sp. (strain PCC 7120 / SAG 25.82 / UTEX 2576).